The following is a 323-amino-acid chain: tRNA dimethylallyltransferase (323 aa).

32 to 39 (GPTASGKS) is an ATP binding site. 34–39 (TASGKS) is a binding site for substrate. The interval 57–60 (DSMQ) is interaction with substrate tRNA.

Belongs to the IPP transferase family. As to quaternary structure, monomer. The cofactor is Mg(2+).

It carries out the reaction adenosine(37) in tRNA + dimethylallyl diphosphate = N(6)-dimethylallyladenosine(37) in tRNA + diphosphate. In terms of biological role, catalyzes the transfer of a dimethylallyl group onto the adenine at position 37 in tRNAs that read codons beginning with uridine, leading to the formation of N6-(dimethylallyl)adenosine (i(6)A). This Rhodopseudomonas palustris (strain BisB5) protein is tRNA dimethylallyltransferase.